We begin with the raw amino-acid sequence, 449 residues long: UDP-N-acetylmuramoylalanine--D-glutamate ligase (449 aa).

118 to 124 (GTNGKTT) is a binding site for ATP.

It belongs to the MurCDEF family.

The protein localises to the cytoplasm. The enzyme catalyses UDP-N-acetyl-alpha-D-muramoyl-L-alanine + D-glutamate + ATP = UDP-N-acetyl-alpha-D-muramoyl-L-alanyl-D-glutamate + ADP + phosphate + H(+). The protein operates within cell wall biogenesis; peptidoglycan biosynthesis. Functionally, cell wall formation. Catalyzes the addition of glutamate to the nucleotide precursor UDP-N-acetylmuramoyl-L-alanine (UMA). This Staphylococcus saprophyticus subsp. saprophyticus (strain ATCC 15305 / DSM 20229 / NCIMB 8711 / NCTC 7292 / S-41) protein is UDP-N-acetylmuramoylalanine--D-glutamate ligase.